The chain runs to 743 residues: Phosphoribosylformylglycinamidine synthase subunit PurL (743 aa).

The active site involves histidine 50. ATP contacts are provided by tyrosine 53 and lysine 92. Glutamate 94 is a binding site for Mg(2+). Substrate contacts are provided by residues 95-98 (SHNH) and arginine 117. The active-site Proton acceptor is histidine 96. Aspartate 118 is a binding site for Mg(2+). Residue glutamine 241 coordinates substrate. A Mg(2+)-binding site is contributed by aspartate 269. A substrate-binding site is contributed by 313–315 (ESQ). ATP is bound by residues aspartate 494 and glycine 531. Asparagine 532 contributes to the Mg(2+) binding site. Position 534 (serine 534) interacts with substrate.

Belongs to the FGAMS family. As to quaternary structure, monomer. Part of the FGAM synthase complex composed of 1 PurL, 1 PurQ and 2 PurS subunits.

It is found in the cytoplasm. It catalyses the reaction N(2)-formyl-N(1)-(5-phospho-beta-D-ribosyl)glycinamide + L-glutamine + ATP + H2O = 2-formamido-N(1)-(5-O-phospho-beta-D-ribosyl)acetamidine + L-glutamate + ADP + phosphate + H(+). The protein operates within purine metabolism; IMP biosynthesis via de novo pathway; 5-amino-1-(5-phospho-D-ribosyl)imidazole from N(2)-formyl-N(1)-(5-phospho-D-ribosyl)glycinamide: step 1/2. Its function is as follows. Part of the phosphoribosylformylglycinamidine synthase complex involved in the purines biosynthetic pathway. Catalyzes the ATP-dependent conversion of formylglycinamide ribonucleotide (FGAR) and glutamine to yield formylglycinamidine ribonucleotide (FGAM) and glutamate. The FGAM synthase complex is composed of three subunits. PurQ produces an ammonia molecule by converting glutamine to glutamate. PurL transfers the ammonia molecule to FGAR to form FGAM in an ATP-dependent manner. PurS interacts with PurQ and PurL and is thought to assist in the transfer of the ammonia molecule from PurQ to PurL. This Mesorhizobium japonicum (strain LMG 29417 / CECT 9101 / MAFF 303099) (Mesorhizobium loti (strain MAFF 303099)) protein is Phosphoribosylformylglycinamidine synthase subunit PurL.